Here is a 252-residue protein sequence, read N- to C-terminus: Adaptation to cold protein B (252 aa).

In terms of assembly, interacts with AtcC, but not with AtcA and AtcJ. Interacts with the RNA polymerase subunits RpoB and RpoC.

Functionally, involved in cold adaptation. Directly interacts with the RNA polymerase and decreases its activity. May direct the DnaK chaperone to the RNA polymerase to sustain life at low temperatures. Overproduction prevents bacterial growth due to RNA polymerase inhibition. The sequence is that of Adaptation to cold protein B from Shewanella oneidensis (strain ATCC 700550 / JCM 31522 / CIP 106686 / LMG 19005 / NCIMB 14063 / MR-1).